A 196-amino-acid polypeptide reads, in one-letter code: Corrinoid adenosyltransferase (196 aa).

36 to 42 (GNGKGKT) is a binding site for ATP.

Belongs to the Cob(I)alamin adenosyltransferase family.

It is found in the cytoplasm. The enzyme catalyses 2 cob(II)yrinate a,c diamide + reduced [electron-transfer flavoprotein] + 2 ATP = 2 adenosylcob(III)yrinate a,c-diamide + 2 triphosphate + oxidized [electron-transfer flavoprotein] + 3 H(+). It catalyses the reaction 2 cob(II)alamin + reduced [electron-transfer flavoprotein] + 2 ATP = 2 adenosylcob(III)alamin + 2 triphosphate + oxidized [electron-transfer flavoprotein] + 3 H(+). Its pathway is cofactor biosynthesis; adenosylcobalamin biosynthesis; adenosylcobalamin from cob(II)yrinate a,c-diamide: step 2/7. In terms of biological role, required for both de novo synthesis of the corrin ring for the assimilation of exogenous corrinoids. Participates in the adenosylation of a variety of incomplete and complete corrinoids. The protein is Corrinoid adenosyltransferase (btuR) of Escherichia coli O6:H1 (strain CFT073 / ATCC 700928 / UPEC).